A 435-amino-acid polypeptide reads, in one-letter code: Secreted RxLR effector protein 35 (435 aa).

An N-terminal signal peptide occupies residues 1–22; it reads MRGAYYIIIALCVVASSQVAAG. Residues 48–65 carry the RxLR-dEER motif; that stretch reads RFLRGSRVVHDDLANEER. The tract at residues 336–357 is disordered; the sequence is RPKRTTDGNTGTISLPTKPTKT. Polar residues predominate over residues 342–354; the sequence is DGNTGTISLPTKP.

It belongs to the RxLR effector family.

The protein resides in the secreted. It localises to the host nucleus. Its function is as follows. Secreted effector that acts as an elicitor that induces cell death in host plant cells. This is Secreted RxLR effector protein 35 from Plasmopara viticola (Downy mildew of grapevine).